Consider the following 293-residue polypeptide: Ribonuclease H2 subunit B (293 aa).

The disordered stretch occupies residues 251–278 (KRPQNSDITSSLLKKPNRKQATKKSKYF). The span at 265–276 (KPNRKQATKKSK) shows a compositional bias: basic residues.

The protein belongs to the RNase H2 subunit B family. As to quaternary structure, component of the RNase H2 complex.

It is found in the nucleus. It localises to the cytoplasm. In terms of biological role, non catalytic subunit of RNase H2, an endonuclease that specifically degrades the RNA of RNA:DNA hybrids. Participates in DNA replication, possibly by mediating the removal of lagging-strand Okazaki fragment RNA primers during DNA replication. Mediates the excision of single ribonucleotides from DNA:RNA duplexes. This Schizosaccharomyces pombe (strain 972 / ATCC 24843) (Fission yeast) protein is Ribonuclease H2 subunit B (rnh202).